The chain runs to 249 residues: 2,3-bisphosphoglycerate-dependent phosphoglycerate mutase 2 (249 aa).

Substrate is bound by residues 8-15 (RHGESIWN), 21-22 (TG), Arg60, 87-90 (ERHY), Lys98, 114-115 (RR), and 183-184 (GN). The active-site Tele-phosphohistidine intermediate is the His9. The Proton donor/acceptor role is filled by Glu87.

It belongs to the phosphoglycerate mutase family. BPG-dependent PGAM subfamily. In terms of assembly, homodimer.

It carries out the reaction (2R)-2-phosphoglycerate = (2R)-3-phosphoglycerate. Its pathway is carbohydrate degradation; glycolysis; pyruvate from D-glyceraldehyde 3-phosphate: step 3/5. In terms of biological role, catalyzes the interconversion of 2-phosphoglycerate and 3-phosphoglycerate. This Nitrosomonas europaea (strain ATCC 19718 / CIP 103999 / KCTC 2705 / NBRC 14298) protein is 2,3-bisphosphoglycerate-dependent phosphoglycerate mutase 2.